A 104-amino-acid chain; its full sequence is MQKIRRDDEIIVIAGKDKGKRGKVLKVLADDRLVVGGINLVKRHTKPNPMSGVQGGIVEKEAPLHASNVAIFNSETNKADRVGFKIEDGKKIRVFKSTQKPVGA.

Belongs to the universal ribosomal protein uL24 family. Part of the 50S ribosomal subunit.

Functionally, one of two assembly initiator proteins, it binds directly to the 5'-end of the 23S rRNA, where it nucleates assembly of the 50S subunit. Its function is as follows. One of the proteins that surrounds the polypeptide exit tunnel on the outside of the subunit. The protein is Large ribosomal subunit protein uL24 of Ectopseudomonas mendocina (strain ymp) (Pseudomonas mendocina).